The sequence spans 137 residues: Large ribosomal subunit protein uL16 (137 aa).

Belongs to the universal ribosomal protein uL16 family. Part of the 50S ribosomal subunit.

Its function is as follows. Binds 23S rRNA and is also seen to make contacts with the A and possibly P site tRNAs. This is Large ribosomal subunit protein uL16 from Francisella tularensis subsp. tularensis (strain FSC 198).